A 50-amino-acid polypeptide reads, in one-letter code: Large ribosomal subunit protein bL33B (50 aa).

The protein belongs to the bacterial ribosomal protein bL33 family.

The protein is Large ribosomal subunit protein bL33B of Metamycoplasma arthritidis (strain 158L3-1) (Mycoplasma arthritidis).